The sequence spans 131 residues: Small ribosomal subunit protein bS18 (131 aa).

Residues 1–10 (MSNGTDSKTA) are compositionally biased toward polar residues. A disordered region spans residues 1-60 (MSNGTDSKTASAPPARSGGGFGGGGSRGGDRGDRGDRGGDRGDRGGGLGGDDDKRGGGRG). Positions 17-27 (SGGGFGGGGSR) are enriched in gly residues. Positions 28-44 (GGDRGDRGDRGGDRGDR) are enriched in basic and acidic residues.

Belongs to the bacterial ribosomal protein bS18 family. Part of the 30S ribosomal subunit. Forms a tight heterodimer with protein bS6.

Its function is as follows. Binds as a heterodimer with protein bS6 to the central domain of the 16S rRNA, where it helps stabilize the platform of the 30S subunit. The polypeptide is Small ribosomal subunit protein bS18 (Myxococcus xanthus (strain DK1622)).